Here is a 1010-residue protein sequence, read N- to C-terminus: Contactin-1 (1010 aa).

Positions 1-19 (MRFFISHLVTLCFIFCVAD) are cleaved as a signal peptide. Ig-like C2-type domains follow at residues 33–123 (PVFE…ATLS), 132–215 (PEEH…KSVF), 232–317 (PADI…ARVY), 322–398 (PEWV…AELK), 404–491 (PTFE…GVLE), and 496–592 (TRIT…LVVR). 2 disulfides stabilise this stretch: Cys57-Cys106 and Cys150-Cys203. Asn200 and Asn249 each carry an N-linked (GlcNAc...) asparagine glycan. A disulfide bridge links Cys254 with Cys301. Asn329 carries an N-linked (GlcNAc...) asparagine glycan. Intrachain disulfides connect Cys343–Cys382 and Cys427–Cys475. Residues Asn448, Asn464, Asn485, and Asn512 are each glycosylated (N-linked (GlcNAc...) asparagine). A disulfide bond links Cys517 and Cys574. N-linked (GlcNAc...) asparagine glycosylation occurs at Asn582. 4 consecutive Fibronectin type-III domains span residues 597–695 (PPGG…TEGA), 700–797 (APSD…SAQD), 802–897 (VPTD…APPS), and 899–990 (RPRI…TAGV). Residues 679–689 (GTGEPSMPSQR) show a composition bias toward polar residues. Residues 679-708 (GTGEPSMPSQRIRTEGAPPNVAPSDVGGGG) are disordered. An N-linked (GlcNAc...) asparagine glycan is attached at Asn924. Ser984 carries the GPI-anchor amidated serine lipid modification. Residues 985-1010 (GATAGVPTLLLGLVLPALGVLAYSGF) constitute a propeptide, removed in mature form.

This sequence belongs to the immunoglobulin superfamily. Contactin family. In terms of assembly, interacts with TNR.

The protein localises to the cell membrane. Functionally, mediates cell surface interactions during nervous system development. Interaction with TNR enhances the neurite outgrowth. This chain is Contactin-1 (CNTN1), found in Gallus gallus (Chicken).